Consider the following 521-residue polypeptide: Colicin-E1* (521 aa).

2 disordered regions span residues 26-52 and 127-163; these read NGNP…AAIH and SGCA…EKEQ. Over residues 30 to 42 the composition is skewed to gly residues; the sequence is DGSGSGGGGGTGG. Residues 133-145 are compositionally biased toward basic residues; that stretch reads KQKKKPVKKRKRA. Residues 146 to 163 are compositionally biased toward basic and acidic residues; the sequence is EKSFQEAEQRRKEIEKEQ. The next 2 helical transmembrane spans lie at 470 to 486 and 493 to 509; these read AVDA…FSVL and IWGI…FIDK.

It belongs to the channel forming colicin family.

It localises to the cell membrane. Its function is as follows. This colicin is a channel-forming colicin. This class of transmembrane toxins depolarize the cytoplasmic membrane, leading to dissipation of cellular energy. In terms of biological role, colicins are polypeptide toxins produced by and active against E.coli and closely related bacteria. The protein is Colicin-E1* (cea) of Shigella sonnei.